We begin with the raw amino-acid sequence, 379 residues long: DNA replication and repair protein RecF (379 aa).

ATP is bound at residue 30–37; the sequence is GKNAQGKT.

It belongs to the RecF family.

The protein resides in the cytoplasm. In terms of biological role, the RecF protein is involved in DNA metabolism; it is required for DNA replication and normal SOS inducibility. RecF binds preferentially to single-stranded, linear DNA. It also seems to bind ATP. The protein is DNA replication and repair protein RecF of Ligilactobacillus salivarius (strain UCC118) (Lactobacillus salivarius).